Reading from the N-terminus, the 571-residue chain is Proline--tRNA ligase (571 aa).

This sequence belongs to the class-II aminoacyl-tRNA synthetase family. ProS type 1 subfamily. As to quaternary structure, homodimer.

It localises to the cytoplasm. It catalyses the reaction tRNA(Pro) + L-proline + ATP = L-prolyl-tRNA(Pro) + AMP + diphosphate. Catalyzes the attachment of proline to tRNA(Pro) in a two-step reaction: proline is first activated by ATP to form Pro-AMP and then transferred to the acceptor end of tRNA(Pro). As ProRS can inadvertently accommodate and process non-cognate amino acids such as alanine and cysteine, to avoid such errors it has two additional distinct editing activities against alanine. One activity is designated as 'pretransfer' editing and involves the tRNA(Pro)-independent hydrolysis of activated Ala-AMP. The other activity is designated 'posttransfer' editing and involves deacylation of mischarged Ala-tRNA(Pro). The misacylated Cys-tRNA(Pro) is not edited by ProRS. This chain is Proline--tRNA ligase, found in Mannheimia succiniciproducens (strain KCTC 0769BP / MBEL55E).